The primary structure comprises 178 residues: Putative pre-16S rRNA nuclease (178 aa).

The span at 1-18 (MDHAEQGPDRPGVDDPGR) shows a compositional bias: basic and acidic residues. Residues 1-21 (MDHAEQGPDRPGVDDPGRGRR) are disordered.

The protein belongs to the YqgF nuclease family.

Its subcellular location is the cytoplasm. Its function is as follows. Could be a nuclease involved in processing of the 5'-end of pre-16S rRNA. The protein is Putative pre-16S rRNA nuclease of Rhodococcus jostii (strain RHA1).